A 400-amino-acid chain; its full sequence is MAKQKYERTKPHVNVGTIGHVDHGKTTLTAAITFCLAKAGGAVPTAYDQIDKAPEERERGITIATAHVEYETEKRHYAHVDCPGHADYVKNMITGAAQMDGAILVVSAADGPMPQTREHILLARQVGVPYIVVFLNKVDQVDDPELLELVEMEVRELLTEYEFPGDEIPIVTGSALKAMECGCGKRECEWCGKVWELMDAVDSYIPTPERDTDKPFLMPIEDVFTITGRGTVTTGRVERGKVKVGDEVEIIGLRDEIRKTVVTGVEMFRKILDEAVAGDNIGTLLRGVDRKEVERGMVLAKPGSIKPHTKFNAEVYVLTKEEGGRHTPFFNGYRPQFYFRTTDVTGVVNLPEGVEMVMPGDNIRMTIELITPIAIEEGLRFAIREGGRTVGAGVVTGIIE.

Residues 10 to 209 (KPHVNVGTIG…AVDSYIPTPE (200 aa)) enclose the tr-type G domain. Residues 19 to 26 (GHVDHGKT) are G1. Position 19–26 (19–26 (GHVDHGKT)) interacts with GTP. T26 is a Mg(2+) binding site. Positions 60 to 64 (GITIA) are G2. Residues 81-84 (DCPG) form a G3 region. Residues 81-85 (DCPGH) and 136-139 (NKVD) contribute to the GTP site. A G4 region spans residues 136 to 139 (NKVD). Positions 174-176 (SAL) are G5.

It belongs to the TRAFAC class translation factor GTPase superfamily. Classic translation factor GTPase family. EF-Tu/EF-1A subfamily. As to quaternary structure, monomer.

The protein localises to the cytoplasm. The catalysed reaction is GTP + H2O = GDP + phosphate + H(+). GTP hydrolase that promotes the GTP-dependent binding of aminoacyl-tRNA to the A-site of ribosomes during protein biosynthesis. This is Elongation factor Tu from Moorella thermoacetica (strain ATCC 39073 / JCM 9320).